Consider the following 364-residue polypeptide: Heavy metal-associated isoprenylated plant protein 35 (364 aa).

Residues 1–12 (MATDEMKSETKK) show a composition bias toward basic and acidic residues. The segment at 1–33 (MATDEMKSETKKTEHKQKQSTQIKQDLPPPTIP) is disordered. One can recognise an HMA domain in the interval 39 to 102 (YKSCTLKVSI…KLNKAGKNAE (64 aa)). A metal cation contacts are provided by cysteine 50 and cysteine 53. Positions 101-265 (AEQLPEIPDP…PPTATDYDRP (165 aa)) are disordered. The span at 111–122 (VDNKPKPVDPKE) shows a compositional bias: basic and acidic residues. The span at 134-144 (QITNEATSSGI) shows a compositional bias: polar residues. Basic and acidic residues-rich tracts occupy residues 154–169 (ECDK…EKCL) and 180–198 (VKEE…KEES). Polar residues predominate over residues 237–253 (SLATTNNPTDGPARTQS). Cysteine 361 bears the Cysteine methyl ester mark. Cysteine 361 is lipidated: S-farnesyl cysteine. Positions 362–364 (AIM) are cleaved as a propeptide — removed in mature form.

This sequence belongs to the HIPP family.

Functionally, heavy-metal-binding protein. This is Heavy metal-associated isoprenylated plant protein 35 from Arabidopsis thaliana (Mouse-ear cress).